We begin with the raw amino-acid sequence, 131 residues long: Glutaredoxin arsenate reductase (131 aa).

Catalysis depends on nucleophile residues C8 and C80. Intrachain disulfides connect C8–C80 and C80–C82.

It belongs to the low molecular weight phosphotyrosine protein phosphatase family. In terms of assembly, homodimer.

It catalyses the reaction O-phospho-L-tyrosyl-[protein] + H2O = L-tyrosyl-[protein] + phosphate. It carries out the reaction [glutaredoxin]-dithiol + arsenate + glutathione + H(+) = glutathionyl-S-S-[glutaredoxin] + arsenite + H2O. Reduces arsenate [As(V)] to arsenite [As(III)] using glutathione and glutaredoxin as sources of reducing equivalents. GrxA is the most effective electron donor in vivo compared to other glutaredoxins. Constitutes the major arsenate reductase compared to ArsI1 and ArsI2. Also shows weak phosphatase activity toward p-nitrophenyl phosphate. The chain is Glutaredoxin arsenate reductase (arsC) from Synechocystis sp. (strain ATCC 27184 / PCC 6803 / Kazusa).